The primary structure comprises 694 residues: Putative bifunctional polynucleotide kinase/RNA ligase (694 aa).

The tract at residues 1–385 (MLHVSRLLAN…TKQALNNKLA (385 aa)) is ligase domain. The segment at 394 to 694 (KQLLVLIGIS…FNVCRDYLEF (301 aa)) is bifunctional 5'-OH polynucleotide kinase/polynucleotide 3'-phosphatase. 401–408 (GISGSGKS) provides a ligand contact to ATP.

The catalysed reaction is a 5'-end dephospho-2'-deoxyribonucleoside-DNA + ATP = a 5'-end 5'-phospho-2'-deoxyribonucleoside-DNA + ADP + H(+). It catalyses the reaction ATP + (ribonucleotide)n-3'-hydroxyl + 5'-phospho-(ribonucleotide)m = (ribonucleotide)n+m + AMP + diphosphate.. In terms of biological role, trifunctional enzyme that possesses a bifunctional polynucleotide kinase/phosphatase activity and an ATP-dependent RNA ligase activity. May therefore play a role to evade an RNA damage-based host response. The polypeptide is Putative bifunctional polynucleotide kinase/RNA ligase (PNK/PNL) (Autographa californica nuclear polyhedrosis virus (AcMNPV)).